The primary structure comprises 1005 residues: uncharacterized protein (1005 aa).

A signal peptide spans 1-24 (MKFQRKYWGLLSTLGVSSAVALSA). A lipid anchor (N-palmitoyl cysteine) is attached at C25. A lipid anchor (S-diacylglycerol cysteine) is attached at C25. 2 disordered regions span residues 105-165 (KKDK…EEKF) and 786-825 (TQKI…WDDV). 2 stretches are compositionally biased toward low complexity: residues 110-131 (TSSQ…TSTS) and 145-156 (QSSSNGQNNQQS). Residues 786–801 (TQKIDQQNTASTTSDV) are compositionally biased toward polar residues.

Its subcellular location is the cell membrane. This is an uncharacterized protein from Mycoplasma pneumoniae (strain ATCC 29342 / M129 / Subtype 1) (Mycoplasmoides pneumoniae).